The following is a 160-amino-acid chain: S-ribosylhomocysteine lyase (160 aa).

3 residues coordinate Fe cation: H57, H61, and C127.

The protein belongs to the LuxS family. In terms of assembly, homodimer. Requires Fe cation as cofactor.

It carries out the reaction S-(5-deoxy-D-ribos-5-yl)-L-homocysteine = (S)-4,5-dihydroxypentane-2,3-dione + L-homocysteine. Involved in the synthesis of autoinducer 2 (AI-2) which is secreted by bacteria and is used to communicate both the cell density and the metabolic potential of the environment. The regulation of gene expression in response to changes in cell density is called quorum sensing. Catalyzes the transformation of S-ribosylhomocysteine (RHC) to homocysteine (HC) and 4,5-dihydroxy-2,3-pentadione (DPD). This chain is S-ribosylhomocysteine lyase, found in Streptococcus uberis (strain ATCC BAA-854 / 0140J).